The sequence spans 393 residues: S-adenosylmethionine synthase 4 (393 aa).

Glutamate 9 lines the Mg(2+) pocket. Histidine 15 contacts ATP. Glutamate 43 is a binding site for K(+). Residues glutamate 56 and glutamine 99 each coordinate L-methionine. ATP is bound by residues 167–169, 235–238, aspartate 246, 252–253, alanine 269, lysine 273, and lysine 277; these read DGK, SGRF, and RK. Aspartate 246 provides a ligand contact to L-methionine. Lysine 277 lines the L-methionine pocket.

It belongs to the AdoMet synthase family. As to quaternary structure, homotetramer. The cofactor is Mn(2+). Mg(2+) serves as cofactor. It depends on Co(2+) as a cofactor. Requires K(+) as cofactor.

Its subcellular location is the cytoplasm. It carries out the reaction L-methionine + ATP + H2O = S-adenosyl-L-methionine + phosphate + diphosphate. Its pathway is amino-acid biosynthesis; S-adenosyl-L-methionine biosynthesis; S-adenosyl-L-methionine from L-methionine: step 1/1. Its function is as follows. Catalyzes the formation of S-adenosylmethionine from methionine and ATP. The reaction comprises two steps that are both catalyzed by the same enzyme: formation of S-adenosylmethionine (AdoMet) and triphosphate, and subsequent hydrolysis of the triphosphate. In Vitis vinifera (Grape), this protein is S-adenosylmethionine synthase 4 (METK4).